The primary structure comprises 118 residues: Large ribosomal subunit protein uL22 (118 aa).

This sequence belongs to the universal ribosomal protein uL22 family. In terms of assembly, part of the 50S ribosomal subunit.

Its function is as follows. This protein binds specifically to 23S rRNA; its binding is stimulated by other ribosomal proteins, e.g. L4, L17, and L20. It is important during the early stages of 50S assembly. It makes multiple contacts with different domains of the 23S rRNA in the assembled 50S subunit and ribosome. The globular domain of the protein is located near the polypeptide exit tunnel on the outside of the subunit, while an extended beta-hairpin is found that lines the wall of the exit tunnel in the center of the 70S ribosome. This Listeria innocua serovar 6a (strain ATCC BAA-680 / CLIP 11262) protein is Large ribosomal subunit protein uL22.